Reading from the N-terminus, the 182-residue chain is Bis(5'-nucleosyl)-tetraphosphatase [asymmetrical] (182 aa).

The HIT domain occupies 3-110 (KQLYFSKFPV…IPRKKADFSE (108 aa)). Substrate contacts are provided by residues N28, Q84, and 90–93 (GQTV). Residues 95–99 (HVHVH) carry the Histidine triad motif motif. The active-site Tele-AMP-histidine intermediate is H97. Substrate is bound at residue H99. Residues 135-161 (RYAGDERPPTSMRQAIPKDEDRKPRTL) are disordered. Residues 150–161 (IPKDEDRKPRTL) are compositionally biased toward basic and acidic residues.

It carries out the reaction P(1),P(4)-bis(5'-guanosyl) tetraphosphate + H2O = GMP + GTP + 2 H(+). Its function is as follows. Asymmetrically hydrolyzes Ap4A to yield AMP and ATP. The protein is Bis(5'-nucleosyl)-tetraphosphatase [asymmetrical] (aph1) of Schizosaccharomyces pombe (strain 972 / ATCC 24843) (Fission yeast).